The following is a 109-amino-acid chain: MNSLCRSKQAPFEYTLSLIGGKWKMRILYELGCEKTMRYGELKRAMPFITHKMLSAQLKELQTDGLIHRSEVSHTPLKVEYSLSDRGRSLYPLIDEMCKWGMAQGGPHM.

Residues 10-109 (APFEYTLSLI…WGMAQGGPHM (100 aa)) enclose the HTH hxlR-type domain.

This is an uncharacterized protein from Bacillus subtilis (strain 168).